The chain runs to 940 residues: Isoleucine--tRNA ligase (940 aa).

The short motif at 58 to 68 (PYANGSIHIGH) is the 'HIGH' region element. Glu564 contributes to the L-isoleucyl-5'-AMP binding site. Positions 605–609 (KMSKS) match the 'KMSKS' region motif. An ATP-binding site is contributed by Lys608. Residues Cys903, Cys906, Cys923, and Cys926 each contribute to the Zn(2+) site.

It belongs to the class-I aminoacyl-tRNA synthetase family. IleS type 1 subfamily. In terms of assembly, monomer. Zn(2+) is required as a cofactor.

Its subcellular location is the cytoplasm. The enzyme catalyses tRNA(Ile) + L-isoleucine + ATP = L-isoleucyl-tRNA(Ile) + AMP + diphosphate. Its function is as follows. Catalyzes the attachment of isoleucine to tRNA(Ile). As IleRS can inadvertently accommodate and process structurally similar amino acids such as valine, to avoid such errors it has two additional distinct tRNA(Ile)-dependent editing activities. One activity is designated as 'pretransfer' editing and involves the hydrolysis of activated Val-AMP. The other activity is designated 'posttransfer' editing and involves deacylation of mischarged Val-tRNA(Ile). This is Isoleucine--tRNA ligase from Shewanella sp. (strain MR-4).